The following is a 294-amino-acid chain: Formamidopyrimidine-DNA glycosylase (294 aa).

Catalysis depends on P2, which acts as the Schiff-base intermediate with DNA. The active-site Proton donor is E3. K61 acts as the Proton donor; for beta-elimination activity in catalysis. 3 residues coordinate DNA: H104, R123, and K169. An FPG-type zinc finger spans residues 255 to 289 (AVYGRQDEPCRRCGAPIVREKFMNRSSYSCPRCQP). R279 (proton donor; for delta-elimination activity) is an active-site residue.

The protein belongs to the FPG family. In terms of assembly, monomer. It depends on Zn(2+) as a cofactor.

The catalysed reaction is Hydrolysis of DNA containing ring-opened 7-methylguanine residues, releasing 2,6-diamino-4-hydroxy-5-(N-methyl)formamidopyrimidine.. It catalyses the reaction 2'-deoxyribonucleotide-(2'-deoxyribose 5'-phosphate)-2'-deoxyribonucleotide-DNA = a 3'-end 2'-deoxyribonucleotide-(2,3-dehydro-2,3-deoxyribose 5'-phosphate)-DNA + a 5'-end 5'-phospho-2'-deoxyribonucleoside-DNA + H(+). Its function is as follows. Involved in base excision repair of DNA damaged by oxidation or by mutagenic agents. Acts as a DNA glycosylase that recognizes and removes damaged bases. Has a preference for oxidized purines, such as 7,8-dihydro-8-oxoguanine (8-oxoG). Has AP (apurinic/apyrimidinic) lyase activity and introduces nicks in the DNA strand. Cleaves the DNA backbone by beta-delta elimination to generate a single-strand break at the site of the removed base with both 3'- and 5'-phosphates. In Nocardia farcinica (strain IFM 10152), this protein is Formamidopyrimidine-DNA glycosylase.